The primary structure comprises 664 residues: Glycine--tRNA ligase beta subunit (664 aa).

Belongs to the class-II aminoacyl-tRNA synthetase family. In terms of assembly, tetramer of two alpha and two beta subunits.

It localises to the cytoplasm. The enzyme catalyses tRNA(Gly) + glycine + ATP = glycyl-tRNA(Gly) + AMP + diphosphate. This chain is Glycine--tRNA ligase beta subunit, found in Rickettsia africae (strain ESF-5).